A 154-amino-acid chain; its full sequence is UPF0547 protein C16orf87 homolog (154 aa).

The interval 46–119 is disordered; the sequence is HPEKAPSSTE…KHEEEREKQE (74 aa). The span at 68-84 shows a compositional bias: basic and acidic residues; it reads VRREKINSTVNKDLENR. Phosphoserine is present on Ser-91. The stretch at 104–132 forms a coiled coil; that stretch reads KSASAKKHEEEREKQEKEIDIYANLSDEK. Positions 109–119 are enriched in basic and acidic residues; that stretch reads KKHEEEREKQE.

It belongs to the UPF0547 family.

In Bos taurus (Bovine), this protein is UPF0547 protein C16orf87 homolog.